The following is a 417-amino-acid chain: Gamma-glutamyl phosphate reductase (417 aa).

It belongs to the gamma-glutamyl phosphate reductase family.

It localises to the cytoplasm. It carries out the reaction L-glutamate 5-semialdehyde + phosphate + NADP(+) = L-glutamyl 5-phosphate + NADPH + H(+). The protein operates within amino-acid biosynthesis; L-proline biosynthesis; L-glutamate 5-semialdehyde from L-glutamate: step 2/2. Its function is as follows. Catalyzes the NADPH-dependent reduction of L-glutamate 5-phosphate into L-glutamate 5-semialdehyde and phosphate. The product spontaneously undergoes cyclization to form 1-pyrroline-5-carboxylate. In Shigella flexneri serotype 5b (strain 8401), this protein is Gamma-glutamyl phosphate reductase.